We begin with the raw amino-acid sequence, 152 residues long: SsrA-binding protein (152 aa).

The segment at 122–152 (KGKKNHDKRETEAARDWQRDKARLMKGDRGD) is disordered. A compositionally biased stretch (basic and acidic residues) spans 128–152 (DKRETEAARDWQRDKARLMKGDRGD).

This sequence belongs to the SmpB family.

The protein resides in the cytoplasm. Its function is as follows. Required for rescue of stalled ribosomes mediated by trans-translation. Binds to transfer-messenger RNA (tmRNA), required for stable association of tmRNA with ribosomes. tmRNA and SmpB together mimic tRNA shape, replacing the anticodon stem-loop with SmpB. tmRNA is encoded by the ssrA gene; the 2 termini fold to resemble tRNA(Ala) and it encodes a 'tag peptide', a short internal open reading frame. During trans-translation Ala-aminoacylated tmRNA acts like a tRNA, entering the A-site of stalled ribosomes, displacing the stalled mRNA. The ribosome then switches to translate the ORF on the tmRNA; the nascent peptide is terminated with the 'tag peptide' encoded by the tmRNA and targeted for degradation. The ribosome is freed to recommence translation, which seems to be the essential function of trans-translation. The chain is SsrA-binding protein from Caulobacter sp. (strain K31).